The primary structure comprises 168 residues: Plastocyanin, chloroplastic (168 aa).

The N-terminal 69 residues, 1 to 69 (MATVTSTTVA…SAVLASNALA (69 aa)), are a transit peptide targeting the chloroplast. Residues 70-168 (VEVLLGASDG…AGMVGQVTVN (99 aa)) form the Plastocyanin-like domain. Cu cation contacts are provided by histidine 106, cysteine 153, histidine 156, and methionine 161.

It belongs to the plastocyanin family. The cofactor is Cu(2+).

The protein resides in the plastid. The protein localises to the chloroplast thylakoid membrane. Participates in electron transfer between P700 and the cytochrome b6-f complex in photosystem I. The chain is Plastocyanin, chloroplastic (PETE) from Pisum sativum (Garden pea).